Here is a 460-residue protein sequence, read N- to C-terminus: UDP-N-acetylmuramoylalanine--D-glutamate ligase (460 aa).

Position 120–126 (120–126) interacts with ATP; the sequence is GSNGKTT.

The protein belongs to the MurCDEF family.

The protein localises to the cytoplasm. The catalysed reaction is UDP-N-acetyl-alpha-D-muramoyl-L-alanine + D-glutamate + ATP = UDP-N-acetyl-alpha-D-muramoyl-L-alanyl-D-glutamate + ADP + phosphate + H(+). Its pathway is cell wall biogenesis; peptidoglycan biosynthesis. In terms of biological role, cell wall formation. Catalyzes the addition of glutamate to the nucleotide precursor UDP-N-acetylmuramoyl-L-alanine (UMA). In Lactobacillus delbrueckii subsp. bulgaricus (strain ATCC BAA-365 / Lb-18), this protein is UDP-N-acetylmuramoylalanine--D-glutamate ligase.